The chain runs to 164 residues: Superoxide dismutase [Cu-Zn] 3 (164 aa).

Positions 51, 53, and 68 each coordinate Cu cation. A disulfide bond links Cys-62 and Cys-151. Zn(2+) is bound by residues His-68, His-76, His-85, and Asp-88. His-125 contacts Cu cation. Residues 162–164 carry the Peroxisome localization signal motif; sequence AKL.

It belongs to the Cu-Zn superoxide dismutase family. Homodimer. The cofactor is Cu cation. Zn(2+) serves as cofactor. As to expression, expressed in leaves (at protein level).

It localises to the peroxisome. It catalyses the reaction 2 superoxide + 2 H(+) = H2O2 + O2. Destroys radicals which are normally produced within the cells and which are toxic to biological systems. The chain is Superoxide dismutase [Cu-Zn] 3 (CSD3) from Arabidopsis thaliana (Mouse-ear cress).